Here is a 92-residue protein sequence, read N- to C-terminus: DNA-directed RNA polymerase subunit omega (92 aa).

This sequence belongs to the RNA polymerase subunit omega family. In terms of assembly, the RNAP catalytic core consists of 2 alpha, 1 beta, 1 beta' and 1 omega subunit. When a sigma factor is associated with the core the holoenzyme is formed, which can initiate transcription.

It carries out the reaction RNA(n) + a ribonucleoside 5'-triphosphate = RNA(n+1) + diphosphate. Functionally, promotes RNA polymerase assembly. Latches the N- and C-terminal regions of the beta' subunit thereby facilitating its interaction with the beta and alpha subunits. The protein is DNA-directed RNA polymerase subunit omega of Shewanella denitrificans (strain OS217 / ATCC BAA-1090 / DSM 15013).